The following is a 304-amino-acid chain: Non-specific ribonucleoside hydrolase RihC (304 aa).

His-233 is an active-site residue.

This sequence belongs to the IUNH family. RihC subfamily.

Its function is as follows. Hydrolyzes both purine and pyrimidine ribonucleosides with a broad-substrate specificity. The protein is Non-specific ribonucleoside hydrolase RihC of Klebsiella pneumoniae subsp. pneumoniae (strain ATCC 700721 / MGH 78578).